A 104-amino-acid polypeptide reads, in one-letter code: MQKIRRDDEIIVIAGKDKGKRGKVLKVLADDRLVVGGLNLVKRHTKPNPMSGVQGGIVEKEAPLHASNVAIFNSETNKADRVGFKVEDGKKIRVFKSTQKAVDA.

Belongs to the universal ribosomal protein uL24 family. In terms of assembly, part of the 50S ribosomal subunit.

Its function is as follows. One of two assembly initiator proteins, it binds directly to the 5'-end of the 23S rRNA, where it nucleates assembly of the 50S subunit. In terms of biological role, one of the proteins that surrounds the polypeptide exit tunnel on the outside of the subunit. This is Large ribosomal subunit protein uL24 from Pseudomonas fluorescens (strain ATCC BAA-477 / NRRL B-23932 / Pf-5).